The sequence spans 948 residues: Zinc finger CCCH domain-containing protein 3 (948 aa).

Disordered stretches follow at residues 25-108 (HGNA…VPQQ), 121-219 (QNVV…RRTV), 265-296 (VDAG…REAS), and 336-493 (NVCK…LKKT). Positions 56–74 (RPSRRGYSSHHGPSWRKKY) are enriched in basic residues. The span at 128–141 (KPPSKSGSASASGA) shows a compositional bias: low complexity. Positions 157–166 (QRPREGEGEP) are enriched in basic and acidic residues. Residues 372–398 (SAPSKYKWKASSPSASSSSSFRWQSEA) are compositionally biased toward low complexity. Polar residues predominate over residues 405–415 (SQLSPVLSRSP). Serine 408 bears the Phosphoserine mark. Positions 441-452 (VKSRTKIIRRRS) are enriched in basic residues. C3H1-type zinc fingers lie at residues 667 to 695 (EKRK…HDPE), 699 to 722 (VCTR…HHVS), 723 to 749 (KEKM…HVYV), 750 to 777 (SRKA…HTLL), and 778 to 800 (CPDF…HRTQ). 2 disordered regions span residues 798–891 (RTQK…HEAP) and 913–948 (ISLQ…KPRL). Residues 834-846 (SASQRPTRQTPSS) show a composition bias toward polar residues. Composition is skewed to low complexity over residues 847–856 (AALTAAAVAA) and 864–885 (SASP…PPAS). Phosphoserine occurs at positions 918 and 920.

As to quaternary structure, interacts with SMAD1, SMAD3, SMAD4, CPSF2 and CPSF3.

The protein resides in the nucleus. Required for the export of polyadenylated mRNAs from the nucleus. Enhances ACVR1B-induced SMAD-dependent transcription. Binds to single-stranded DNA but not to double-stranded DNA in vitro. Involved in RNA cleavage. The sequence is that of Zinc finger CCCH domain-containing protein 3 (ZC3H3) from Homo sapiens (Human).